Here is a 180-residue protein sequence, read N- to C-terminus: Putative manganese efflux pump MntP (180 aa).

6 helical membrane passes run 6-26 (LMAL…GIGL), 34-54 (ILQI…TGWL), 67-87 (AAVI…WAAW), 102-122 (FWGL…AGFT), 131-151 (LLAA…GLVF), and 160-180 (GERA…KLFF).

It belongs to the MntP (TC 9.B.29) family.

It is found in the cell membrane. Probably functions as a manganese efflux pump. The sequence is that of Putative manganese efflux pump MntP from Pelotomaculum thermopropionicum (strain DSM 13744 / JCM 10971 / SI).